The sequence spans 465 residues: 5-cytosine rRNA methyltransferase nsun-4 (465 aa).

The N-terminal 6 residues, 1 to 6 (MSCLRQ), are a transit peptide targeting the mitochondrion. Basic and acidic residues predominate over residues 106–130 (QAIETKRKSVEEKANRETQKVKHEI). A disordered region spans residues 106–145 (QAIETKRKSVEEKANRETQKVKHEISNPSTSTNTEDSEPD). S-adenosyl-L-methionine-binding positions include 260–266 (CAAPGGK), Asp-283, Asp-316, and Asp-335. Catalysis depends on Cys-390, which acts as the Nucleophile.

Belongs to the class I-like SAM-binding methyltransferase superfamily. RsmB/NOP family.

It is found in the mitochondrion. It carries out the reaction a cytidine in rRNA + S-adenosyl-L-methionine = a 5-methylcytidine in rRNA + S-adenosyl-L-homocysteine + H(+). The enzyme catalyses a cytidine in tRNA + S-adenosyl-L-methionine = a 5-methylcytidine in tRNA + S-adenosyl-L-homocysteine + H(+). Mitochondrial methyltransferase which methylates cytosine to 5-methylcytosine (m5C) in rRNAs and tRNAs at multiple sites. May play a role in the translation of leucine and proline codons. The sequence is that of 5-cytosine rRNA methyltransferase nsun-4 from Caenorhabditis elegans.